A 557-amino-acid polypeptide reads, in one-letter code: MTDIPESLKPFVTKKVIHSTWAGTFLCKPQAIFQPRNVEEIQELIKQARLHGKTIMTVGSGHSPSDLTMTTEWLCNLDKFNHVLLEEPYYAPKSPTDDTPEIKFVDLTVEAGTRIFELNEYLKRNNLAIQNLGSISDQSIAGLISTGTHGSTQYHGLVSQQVVSVKFLNSAGELITCSSVDKPEYFRAILLSLGKIGIITHVTLRTCPKYTIKSKQEIINFETLLNNWDNLWLESEFIRIWWFPYTNKCVLWRANKSTDPLSDPRPSWYGTKLGRFFYESLLWVSVHLFPRLTPFVEKFVFGQQYGEVETLGKGDIAVQNSVEGLNMDCLFSQFVNEWSSPLNSGPEILTELKKIITDASQTGDFFVHAPIEVRCSNVTYSDEPFTDDKNQKSLYPSQEWLSNRSKTSAGPIPGNNLRPYLDNSPKLPYSKDGKITNDQLTLFINATMYRPFGTNVETHKWFQLFEDVMSKAGGKPHWAKNFIGLTQDEKYDKQQDLKTQLEFGGKPFYTMLGFKPVMQDWFGKDLVAFNKVRKETDPDGVFLSGKVWAERNGILLD.

Residues 25–209 enclose the FAD-binding PCMH-type domain; sequence FLCKPQAIFQ…THVTLRTCPK (185 aa). FAD contacts are provided by residues 58 to 61, 62 to 63, 144 to 148, Ile-199, and 543 to 546; these read VGSG, HS, ISTGT, and LSGK. Pros-8alpha-FAD histidine is present on His-62.

This sequence belongs to the oxygen-dependent FAD-linked oxidoreductase family. FAD is required as a cofactor.

It carries out the reaction D-arabinono-1,4-lactone + O2 = dehydro-D-arabinono-1,4-lactone + H2O2 + H(+). The catalysed reaction is L-galactono-1,4-lactone + O2 = L-ascorbate + H2O2 + H(+). The enzyme catalyses L-gulono-1,4-lactone + O2 = L-ascorbate + H2O2 + H(+). It catalyses the reaction L-xylono-1,4-lactone + O2 = dehydro-L-arabinono-1,4-lactone + H2O2 + H(+). Its pathway is cofactor biosynthesis; D-erythroascorbate biosynthesis; dehydro-D-arabinono-1,4-lactone from D-arabinose: step 2/2. D-arabinono-1,4-lactone oxidase that catalyzes the final step of biosynthesis of D-erythroascorbic acid, an important antioxidant and one of the virulence factors enhancing the pathogenicity. Is also able to oxidize L-galactono-1,4-lactone, L-xylono-1,4-lactone and L-gulono-1,4-lactone. This is D-arabinono-1,4-lactone oxidase from Candida albicans (strain SC5314 / ATCC MYA-2876) (Yeast).